The primary structure comprises 876 residues: Leucine--tRNA ligase (876 aa).

A 'HIGH' region motif is present at residues 43–53 (PYPSGRIHMGH). The 'KMSKS' region signature appears at 632–636 (KMSKS). Residue lysine 635 participates in ATP binding.

Belongs to the class-I aminoacyl-tRNA synthetase family.

It is found in the cytoplasm. The catalysed reaction is tRNA(Leu) + L-leucine + ATP = L-leucyl-tRNA(Leu) + AMP + diphosphate. The polypeptide is Leucine--tRNA ligase (Rhodopseudomonas palustris (strain TIE-1)).